The sequence spans 420 residues: Putative competence-damage inducible protein (420 aa).

The protein belongs to the CinA family.

The protein is Putative competence-damage inducible protein of Halalkalibacterium halodurans (strain ATCC BAA-125 / DSM 18197 / FERM 7344 / JCM 9153 / C-125) (Bacillus halodurans).